A 206-amino-acid polypeptide reads, in one-letter code: Putative 3-methyladenine DNA glycosylase (206 aa).

The protein belongs to the DNA glycosylase MPG family.

The polypeptide is Putative 3-methyladenine DNA glycosylase (Rhodopseudomonas palustris (strain ATCC BAA-98 / CGA009)).